Here is a 284-residue protein sequence, read N- to C-terminus: MSWFEKILPSIKQVTERKKNVPEGLWTKCPKCESTLYRAEVRRNLEVCPKCDHHMRLGGRDRLEAFFDEGTGVEISAEVTPVDALKFKDIKPYKTRIAQAQKATGEKDSFITMTGKIQGLEVVAGAFEFKFMGGSMGSVMGEKFVRAVNEAIERRCPLIVFSASGGARMQEALFSLMQMAKTSAALGHLRANKLPFISVLTDPTMGGVSASFAMLGDLNIAEPKALIGFAGPRVIEQTVREKLPEGFQRSEFLLEHGAIDRIIHRHNLSDELASICRMLLQKSA.

One can recognise a CoA carboxyltransferase N-terminal domain in the interval 25 to 284 (LWTKCPKCES…ICRMLLQKSA (260 aa)). Zn(2+) is bound by residues cysteine 29, cysteine 32, cysteine 48, and cysteine 51. The C4-type zinc finger occupies 29–51 (CPKCESTLYRAEVRRNLEVCPKC).

It belongs to the AccD/PCCB family. In terms of assembly, acetyl-CoA carboxylase is a heterohexamer composed of biotin carboxyl carrier protein (AccB), biotin carboxylase (AccC) and two subunits each of ACCase subunit alpha (AccA) and ACCase subunit beta (AccD). Requires Zn(2+) as cofactor.

Its subcellular location is the cytoplasm. It carries out the reaction N(6)-carboxybiotinyl-L-lysyl-[protein] + acetyl-CoA = N(6)-biotinyl-L-lysyl-[protein] + malonyl-CoA. Its pathway is lipid metabolism; malonyl-CoA biosynthesis; malonyl-CoA from acetyl-CoA: step 1/1. Its function is as follows. Component of the acetyl coenzyme A carboxylase (ACC) complex. Biotin carboxylase (BC) catalyzes the carboxylation of biotin on its carrier protein (BCCP) and then the CO(2) group is transferred by the transcarboxylase to acetyl-CoA to form malonyl-CoA. The polypeptide is Acetyl-coenzyme A carboxylase carboxyl transferase subunit beta (Hydrogenovibrio crunogenus (strain DSM 25203 / XCL-2) (Thiomicrospira crunogena)).